The sequence spans 177 residues: GTP-dependent dephospho-CoA kinase (177 aa).

Positions 45, 46, 47, 64, and 120 each coordinate GTP.

It belongs to the GTP-dependent DPCK family.

It carries out the reaction 3'-dephospho-CoA + GTP = GDP + CoA + H(+). Its pathway is cofactor biosynthesis; coenzyme A biosynthesis. In terms of biological role, catalyzes the GTP-dependent phosphorylation of the 3'-hydroxyl group of dephosphocoenzyme A to form coenzyme A (CoA). The protein is GTP-dependent dephospho-CoA kinase of Halobacterium salinarum (strain ATCC 29341 / DSM 671 / R1).